Here is a 348-residue protein sequence, read N- to C-terminus: GTPase Obg 1 (348 aa).

The Obg domain maps to 1 to 159 (MSFVDEAKIH…HCVLLKLKIV (159 aa)). The OBG-type G domain occupies 160-329 (SDVGIIGMPN…LHAQVKKAVV (170 aa)). Residues 166–173 (GMPNAGKS), 191–195 (FTTLE), 212–215 (DIPG), 279–282 (NKCD), and 310–312 (GDE) contribute to the GTP site. The Mg(2+) site is built by serine 173 and threonine 193.

Belongs to the TRAFAC class OBG-HflX-like GTPase superfamily. OBG GTPase family. In terms of assembly, monomer. Mg(2+) serves as cofactor.

Its subcellular location is the cytoplasm. In terms of biological role, an essential GTPase which binds GTP, GDP and possibly (p)ppGpp with moderate affinity, with high nucleotide exchange rates and a fairly low GTP hydrolysis rate. Plays a role in control of the cell cycle, stress response, ribosome biogenesis and in those bacteria that undergo differentiation, in morphogenesis control. This is GTPase Obg 1 from Anaplasma marginale (strain St. Maries).